Consider the following 738-residue polypeptide: Isocitrate dehydrogenase [NADP] (738 aa).

NADP(+) contacts are provided by asparagine 83 and serine 85. Positions 130, 133, 137, 143, and 253 each coordinate D-threo-isocitrate. Asparagine 133 provides a ligand contact to NADP(+). Aspartate 346 serves as a coordination point for Mg(2+). Tyrosine 416 and arginine 543 together coordinate D-threo-isocitrate. Positions 544 and 548 each coordinate Mg(2+). NADP(+)-binding residues include glycine 580, histidine 585, arginine 596, aspartate 598, and arginine 645.

It belongs to the monomeric-type IDH family. In terms of assembly, monomer. Requires Mg(2+) as cofactor. Mn(2+) is required as a cofactor.

The protein resides in the cytoplasm. It catalyses the reaction D-threo-isocitrate + NADP(+) = 2-oxoglutarate + CO2 + NADPH. Its activity is regulated as follows. Weakly inhibited by oxaloacetate, 2-oxoglutarate and citrate. Severely inhibited by oxaloacetate plus glyoxylate. Its function is as follows. Catalyzes the oxidative decarboxylation of isocitrate to 2-oxoglutarate and carbon dioxide with the concomitant reduction of NADP(+). Cannot use NAD(+). The chain is Isocitrate dehydrogenase [NADP] from Corynebacterium glutamicum (strain ATCC 13032 / DSM 20300 / JCM 1318 / BCRC 11384 / CCUG 27702 / LMG 3730 / NBRC 12168 / NCIMB 10025 / NRRL B-2784 / 534).